The primary structure comprises 213 residues: Thiopurine S-methyltransferase (213 aa).

4 residues coordinate S-adenosyl-L-methionine: tryptophan 10, leucine 45, glutamate 66, and arginine 121.

This sequence belongs to the class I-like SAM-binding methyltransferase superfamily. TPMT family.

It is found in the cytoplasm. The enzyme catalyses S-adenosyl-L-methionine + a thiopurine = S-adenosyl-L-homocysteine + a thiopurine S-methylether.. The chain is Thiopurine S-methyltransferase from Aliivibrio fischeri (strain MJ11) (Vibrio fischeri).